A 331-amino-acid polypeptide reads, in one-letter code: Adenosine deaminase (331 aa).

Residues His-12 and His-14 each contribute to the Zn(2+) site. Residues His-14, Asp-16, and Gly-170 each contribute to the substrate site. His-197 contacts Zn(2+). Residue Glu-200 is the Proton donor of the active site. Asp-278 serves as a coordination point for Zn(2+). Residue Asp-279 coordinates substrate.

The protein belongs to the metallo-dependent hydrolases superfamily. Adenosine and AMP deaminases family. Adenosine deaminase subfamily. Zn(2+) is required as a cofactor.

The catalysed reaction is adenosine + H2O + H(+) = inosine + NH4(+). It carries out the reaction 2'-deoxyadenosine + H2O + H(+) = 2'-deoxyinosine + NH4(+). Its function is as follows. Catalyzes the hydrolytic deamination of adenosine and 2-deoxyadenosine. This is Adenosine deaminase from Shewanella denitrificans (strain OS217 / ATCC BAA-1090 / DSM 15013).